Consider the following 284-residue polypeptide: 3-oxoadipate:acetyl-CoA acetyltransferase (284 aa).

Positions 47, 49, and 229 each coordinate Zn(2+).

This sequence belongs to the BKACE family. Zn(2+) serves as cofactor.

It carries out the reaction 3-oxoadipate + acetyl-CoA = acetoacetate + succinyl-CoA. In terms of biological role, catalyzes the condensation of 3-oxoadipate (beta-ketoadipate) and acetyl-CoA, forming acetoacetate and succinyl-CoA. Is likely involved is the degradation of 3-oxoadipate through an alternative pathway, within catechol degradation. The chain is 3-oxoadipate:acetyl-CoA acetyltransferase from Cupriavidus necator (strain ATCC 17699 / DSM 428 / KCTC 22496 / NCIMB 10442 / H16 / Stanier 337) (Ralstonia eutropha).